A 54-amino-acid polypeptide reads, in one-letter code: Large ribosomal subunit protein bL33 (54 aa).

It belongs to the bacterial ribosomal protein bL33 family.

This Corynebacterium glutamicum (strain R) protein is Large ribosomal subunit protein bL33.